We begin with the raw amino-acid sequence, 204 residues long: Elongation factor Ts (204 aa).

Residues 80–83 form an involved in Mg(2+) ion dislocation from EF-Tu region; sequence TDFV.

It belongs to the EF-Ts family.

Its subcellular location is the cytoplasm. Its function is as follows. Associates with the EF-Tu.GDP complex and induces the exchange of GDP to GTP. It remains bound to the aminoacyl-tRNA.EF-Tu.GTP complex up to the GTP hydrolysis stage on the ribosome. The polypeptide is Elongation factor Ts (Thermoanaerobacter sp. (strain X514)).